A 459-amino-acid polypeptide reads, in one-letter code: DNA-binding protein P3A2 (459 aa).

The disordered stretch occupies residues Met1 to Ser25.

It belongs to the NRF1/Ewg family.

It is found in the nucleus. Its function is as follows. Transcriptional regulator that interacts with specific sites in the control region of the cyIIIa actin gene. Also binds specifically to similar target sites located in the regulatory region of the SM50 gene. The polypeptide is DNA-binding protein P3A2 (Strongylocentrotus purpuratus (Purple sea urchin)).